We begin with the raw amino-acid sequence, 624 residues long: tRNA uridine 5-carboxymethylaminomethyl modification enzyme MnmG (624 aa).

FAD-binding positions include 13 to 18, V125, and S180; that span reads GGGHAG. Residue 273-287 participates in NAD(+) binding; the sequence is GPRYCPSIEDKIVRF. Residue Q370 coordinates FAD.

The protein belongs to the MnmG family. In terms of assembly, homodimer. Heterotetramer of two MnmE and two MnmG subunits. FAD is required as a cofactor.

The protein resides in the cytoplasm. Functionally, NAD-binding protein involved in the addition of a carboxymethylaminomethyl (cmnm) group at the wobble position (U34) of certain tRNAs, forming tRNA-cmnm(5)s(2)U34. The protein is tRNA uridine 5-carboxymethylaminomethyl modification enzyme MnmG of Legionella pneumophila (strain Corby).